The chain runs to 349 residues: Anthranilate phosphoribosyltransferase (349 aa).

5-phospho-alpha-D-ribose 1-diphosphate-binding positions include G82, 85-86 (GD), 92-95 (NVST), 110-118 (KHGNRAVSG), and S122. Residue G82 coordinates anthranilate. S94 is a binding site for Mg(2+). N113 is an anthranilate binding site. R168 provides a ligand contact to anthranilate. The Mg(2+) site is built by D227 and E228.

Belongs to the anthranilate phosphoribosyltransferase family. Homodimer. Mg(2+) is required as a cofactor.

It carries out the reaction N-(5-phospho-beta-D-ribosyl)anthranilate + diphosphate = 5-phospho-alpha-D-ribose 1-diphosphate + anthranilate. The protein operates within amino-acid biosynthesis; L-tryptophan biosynthesis; L-tryptophan from chorismate: step 2/5. In terms of biological role, catalyzes the transfer of the phosphoribosyl group of 5-phosphorylribose-1-pyrophosphate (PRPP) to anthranilate to yield N-(5'-phosphoribosyl)-anthranilate (PRA). This is Anthranilate phosphoribosyltransferase from Pseudomonas fluorescens (strain Pf0-1).